Reading from the N-terminus, the 428-residue chain is Cytochrome c biogenesis protein CcsB (428 aa).

3 consecutive transmembrane segments (helical) span residues 14–34 (LKFA…GTFI), 72–92 (SLWF…CSFR), and 162–182 (IGPL…AYGS).

It belongs to the Ccs1/CcsB family. May interact with CcsA.

Its subcellular location is the cellular thylakoid membrane. In terms of biological role, required during biogenesis of c-type cytochromes (cytochrome c6 and cytochrome f) at the step of heme attachment. The polypeptide is Cytochrome c biogenesis protein CcsB (Prochlorococcus marinus (strain MIT 9301)).